The following is a 1712-amino-acid chain: MAGAWLRWGLLLWAGLLAWSAHGRVRRITYVVRPGPGLPAGALPLAGPPRTFNVALDARYSRSSTAASSRALAGPPAERTRRTSQPGGAALPGLRSPLPPEPARPGGPSRQLHSKAGAQTAVTRFAKHGRQVVRSQVQQDAQSAGGSRLQVQQKQQLQGINVCGGQCCHGWSKPPGSQRCTKPSCVPPCQNGGMCLRPQLCVCKPGSKGKACEITAAQDTMPPAFGGQNPGSSWAPLEQAAKHTSTKKADTLPRVSPVAQMTLTLKPKPSMGLSQQIHPQVAPLSSQNVMIRHGQTQEYLLKPKYFPAPKVVSAEQSTEGSFSLRYGQEQGTAPFQVSNHTGRIKVVFTPSICKVTCTKGNCQNSCQKGNTTTLISENGHAADTLTATNFRVVICHLPCMNGGQCSSRDKCQCPPNFTGKLCQIPVLGASMPKLYQHAQQQGKALGSHVIHSTHTLPLTMTSQQGVKVKFPPNIVNIHVKHPPEASVQIHQVSRIDSPGGQKVKEAQPGQSQVSYQGLPVQKTQTVHSTYSHQQLIPHVYPVAAKTQLGRCFQETIGSQCGKALPGLSKQEDCCGTVGTSWGFNKCQKCPKKQSYHGYTQMMECLQGYKRVNNTFCQDINECQLQGVCPNGECLNTMGSYRCSCKMGFGPDPTFSSCVPDPPVISEEKGPCYRLVSPGRHCMHPLSVHLTKQICCCSVGKAWGPHCEKCPLPGTAAFKEICPGGMGYTVSGVHRRRPIHQHIGKEAVYVKPKNTQPVAKSTHPPPLPAKEEPVEALTSSWEHGPRGAEPEVVTAPPEKEIPSLDQEKTRLEPGQPQLSPGVSTIHLHPQFPVVVEKTSPPVPVEVAPEASTSSASQVIAPTQVTEINECTVNPDICGAGHCINLPVRYTCICYEGYKFSEQLRKCVDIDECAQVRHLCSQGRCENTEGSFLCVCPAGFMASEEGTNCIDVDECLRPDMCRDGRCINTAGAFRCEYCDSGYRMSRRGYCEDIDECLKPSTCPEEQCVNTPGSYQCVPCTEGFRGWNGQCLDVDECLQPKVCTNGSCTNLEGSYMCSCHRGYSPTPDHRHCQDIDECQQGNLCMNGQCRNTDGSFRCTCGQGYQLSAAKDQCEDIDECEHHHLCSHGQCRNTEGSFQCVCNQGYRASVLGDHCEDINECLEDSSVCQGGDCINTAGSYDCTCPDGFQLNDNKGCQDINECAQPGLCGSHGECLNTQGSFHCVCEQGFSISADGRTCEDIDECVNNTVCDSHGFCDNTAGSFRCLCYQGFQAPQDGQGCVDVNECELLSGVCGEAFCENVEGSFLCVCADENQEYSPMTGQCRSRVTEDSGVDRQPREEKKECYYNLNDASLCDNVLAPNVTKQECCCTSGAGWGDNCEIFPCPVQGTAEFTEMCPRGKGLVPAGESSYDTGGENYKDADECLLFGEEICKNGYCLNTQPGYECYCKQGTYYDPVKLQCFDMDECQDPNSCIDGQCVNTEGSYNCFCTHPMVLDASEKRCVQPTESNEQIEETDVYQDLCWEHLSEEYVCSRPLVGKQTTYTECCCLYGEAWGMQCALCPMKDSDDYAQLCNIPVTGRRRPYGRDALVDFSEQYGPETDPYFIQDRFLNSFEELQAEECGILNGCENGRCVRVQEGYTCDCFDGYHLDMAKMTCVDVNECSELNNRMSLCKNAKCINTEGSYKCLCLPGYIPSDKPNYCTPLNSALNLDKESDLE.

The signal sequence occupies residues 1–23 (MAGAWLRWGLLLWAGLLAWSAHG). A disordered region spans residues 65–118 (TAASSRALAGPPAERTRRTSQPGGAALPGLRSPLPPEPARPGGPSRQLHSKAGA). An EGF-like 1 domain is found at 181-213 (TKPSCVPPCQNGGMCLRPQLCVCKPGSKGKACE). 3 cysteine pairs are disulfide-bonded: C185/C195, C189/C201, and C203/C212. N-linked (GlcNAc...) asparagine glycosylation is found at N339 and N370. The region spanning 391-423 (RVVICHLPCMNGGQCSSRDKCQCPPNFTGKLCQ) is the EGF-like 2 domain. 6 disulfides stabilise this stretch: C395–C405, C399–C411, C413–C422, C551–C573, C560–C586, and C574–C589. N416 carries an N-linked (GlcNAc...) asparagine glycan. The TB 1 domain occupies 549–601 (GRCFQETIGSQCGKALPGLSKQEDCCGTVGTSWGFNKCQKCPKKQSYHGYTQM). N612 carries N-linked (GlcNAc...) asparagine glycosylation. The region spanning 618-658 (DINECQLQGVCPNGECLNTMGSYRCSCKMGFGPDPTFSSCV) is the EGF-like 3; calcium-binding domain. Disulfide bonds link C622–C633, C628–C642, C644–C657, C671–C694, C681–C706, C695–C709, and C696–C721. S639 carries O-linked (Glc) serine glycosylation. The TB 2 domain occupies 669 to 721 (GPCYRLVSPGRHCMHPLSVHLTKQICCCSVGKAWGPHCEKCPLPGTAAFKEIC). The segment at 753–799 (NTQPVAKSTHPPPLPAKEEPVEALTSSWEHGPRGAEPEVVTAPPEKE) is disordered. Residues T761 and T793 are each glycosylated (O-linked (GalNAc...) threonine). The EGF-like 4; calcium-binding domain occupies 865–906 (EINECTVNPDICGAGHCINLPVRYTCICYEGYKFSEQLRKCV). Cystine bridges form between C869/C881, C876/C890, C892/C905, C911/C923, C918/C932, C934/C947, C953/C964, C959/C973, C976/C988, C994/C1005, C1000/C1014, C1017/C1028, C1034/C1045, C1040/C1054, C1056/C1069, C1075/C1086, C1081/C1095, C1097/C1110, C1116/C1127, C1122/C1136, C1138/C1151, C1157/C1169, C1164/C1178, C1180/C1192, C1198/C1210, C1204/C1219, C1221/C1234, C1240/C1252, C1246/C1261, C1263/C1276, C1282/C1294, C1289/C1303, C1305/C1319, C1340/C1363, C1350/C1375, C1364/C1380, and C1365/C1392. The 42-residue stretch at 907 to 948 (DIDECAQVRHLCSQGRCENTEGSFLCVCPAGFMASEEGTNCI) folds into the EGF-like 5; calcium-binding domain. An O-linked (Glc) serine glycan is attached at S929. One can recognise an EGF-like 6; calcium-binding domain in the interval 949–989 (DVDECLRPDMCRDGRCINTAGAFRCEYCDSGYRMSRRGYCE). N966 is subject to (3R)-3-hydroxyasparagine. The EGF-like 7; calcium-binding domain occupies 990 to 1029 (DIDECLKPSTCPEEQCVNTPGSYQCVPCTEGFRGWNGQCL). The O-linked (Glc) serine glycan is linked to S1011. One can recognise an EGF-like 8; calcium-binding domain in the interval 1030 to 1070 (DVDECLQPKVCTNGSCTNLEGSYMCSCHRGYSPTPDHRHCQ). N1042 is a glycosylation site (N-linked (GlcNAc...) asparagine). O-linked (Glc) serine glycosylation occurs at S1051. The 41-residue stretch at 1071–1111 (DIDECQQGNLCMNGQCRNTDGSFRCTCGQGYQLSAAKDQCE) folds into the EGF-like 9; calcium-binding domain. The 41-residue stretch at 1112–1152 (DIDECEHHHLCSHGQCRNTEGSFQCVCNQGYRASVLGDHCE) folds into the EGF-like 10; calcium-binding domain. N1129 is modified ((3R)-3-hydroxyasparagine). A glycan (O-linked (Glc) serine) is linked at S1133. The EGF-like 11; calcium-binding domain occupies 1153 to 1193 (DINECLEDSSVCQGGDCINTAGSYDCTCPDGFQLNDNKGCQ). The EGF-like 12; calcium-binding domain maps to 1194 to 1235 (DINECAQPGLCGSHGECLNTQGSFHCVCEQGFSISADGRTCE). O-linked (Glc) serine glycosylation occurs at S1216. The region spanning 1236 to 1277 (DIDECVNNTVCDSHGFCDNTAGSFRCLCYQGFQAPQDGQGCV) is the EGF-like 13; calcium-binding domain. N-linked (GlcNAc...) asparagine glycosylation occurs at N1242. Positions 1278–1320 (DVNECELLSGVCGEAFCENVEGSFLCVCADENQEYSPMTGQCR) constitute an EGF-like 14; calcium-binding domain. The interval 1335-1402 (EEKKECYYNL…PRGKGLVPAG (68 aa)) is 8-Cys3 region. A TB 3 domain is found at 1338-1392 (KECYYNLNDASLCDNVLAPNVTKQECCCTSGAGWGDNCEIFPCPVQGTAEFTEMC). The N-linked (GlcNAc...) asparagine glycan is linked to N1357. Position 1405 is a phosphoserine (S1405). Positions 1415–1457 (DADECLLFGEEICKNGYCLNTQPGYECYCKQGTYYDPVKLQCF) constitute an EGF-like 15; calcium-binding domain. 10 cysteine pairs are disulfide-bonded: C1419/C1432, C1427/C1441, C1443/C1456, C1462/C1473, C1468/C1482, C1484/C1497, C1517/C1541, C1527/C1553, C1542/C1556, and C1543/C1568. The EGF-like 16; calcium-binding domain occupies 1458–1498 (DMDECQDPNSCIDGQCVNTEGSYNCFCTHPMVLDASEKRCV). S1479 is a glycosylation site (O-linked (Glc) serine). The tract at residues 1498–1712 (VQPTESNEQI…LNLDKESDLE (215 aa)) is C-terminal domain. A TB 4 domain is found at 1515 to 1568 (DLCWEHLSEEYVCSRPLVGKQTTYTECCCLYGEAWGMQCALCPMKDSDDYAQLC). 2 positions are modified to phosphoserine: S1588 and S1607. An EGF-like 17 domain is found at 1612–1652 (QAEECGILNGCENGRCVRVQEGYTCDCFDGYHLDMAKMTCV). 6 disulfides stabilise this stretch: C1616-C1627, C1622-C1636, C1638-C1651, C1657-C1672, C1667-C1681, and C1683-C1696. Positions 1653–1697 (DVNECSELNNRMSLCKNAKCINTEGSYKCLCLPGYIPSDKPNYCT) constitute an EGF-like 18; calcium-binding domain. A glycan (O-linked (Glc) serine) is linked at S1678.

Belongs to the LTBP family. Interacts with TGFB1; associates via disulfide bonds with the Latency-associated peptide chain (LAP) regulatory chain of TGFB1, leading to regulate activation of TGF-beta-1. LTBP1 does not bind directly to TGF-beta-1, the active chain of TGFB1. Interacts (via C-terminal domain) with FBN1 (via N-terminal domain). Interacts with FBN2. Interacts with ADAMTSL2. Interacts with EFEMP2. In terms of processing, contains hydroxylated asparagine residues. Two intrachain disulfide bonds from the TB3 domain are rearranged upon TGFB1 binding, and form interchain bonds with TGFB1 propeptide, anchoring it to the extracellular matrix. Post-translationally, O-glycosylated on serine residues by POGLUT2 and POGLUT3.

It is found in the secreted. Its subcellular location is the extracellular space. The protein resides in the extracellular matrix. Key regulator of transforming growth factor beta (TGFB1, TGFB2 and TGFB3) that controls TGF-beta activation by maintaining it in a latent state during storage in extracellular space. Associates specifically via disulfide bonds with the Latency-associated peptide (LAP), which is the regulatory chain of TGF-beta, and regulates integrin-dependent activation of TGF-beta. Outcompeted by LRRC32/GARP for binding to LAP regulatory chain of TGF-beta. The chain is Latent-transforming growth factor beta-binding protein 1 from Mus musculus (Mouse).